Consider the following 194-residue polypeptide: 3-isopropylmalate dehydratase small subunit (194 aa).

It belongs to the LeuD family. LeuD type 1 subfamily. In terms of assembly, heterodimer of LeuC and LeuD.

The enzyme catalyses (2R,3S)-3-isopropylmalate = (2S)-2-isopropylmalate. The protein operates within amino-acid biosynthesis; L-leucine biosynthesis; L-leucine from 3-methyl-2-oxobutanoate: step 2/4. In terms of biological role, catalyzes the isomerization between 2-isopropylmalate and 3-isopropylmalate, via the formation of 2-isopropylmaleate. The sequence is that of 3-isopropylmalate dehydratase small subunit from Limosilactobacillus fermentum (strain NBRC 3956 / LMG 18251) (Lactobacillus fermentum).